Reading from the N-terminus, the 516-residue chain is MEGSVLTLVLLAALVVCGSWGLNEEERLIRHLFEEKAYNKELRPAAHKESVEISLALTLSNLISLKEVEETLTTNVWIEQGWTDSRLQWDAEDFGNISVLRLPADMVWLPEIVLENNNDGSFQISYSCNVLIYPSGSVYWLPPAIFRSSCPISVTYFPFDWQNCSLKFSSLKYTTKEITLSLKQAEEDGRSYPVEWIIIDPEGFTENGEWEIVHRPARVNVDPSVPLDSPNRQDVTFYLIIRRKPLFYVINILVPCVLISFMINLVFYLPADCGEKTSMAISVLLAQSVFLLLISKRLPATSMAIPLIGKFLLFGMVLVTMVVVICVIVLNIHFRTPSTHVLSEPVKKLFLETLPEILHMSRPAEDGPSPGTLIRRSSSLGYISKAEEYFSLKSRSDLMFEKQSERHGLARRLTTARRPPAGSEQAQQELFSELKPAVDGANFIVNHMKDQNNYNEEKDCWNRVARTVDRLCLFVVTPIMVVGTAWIFLQGAYNQPPPQPFPGDPFSYLEKDKRFI.

An N-terminal signal peptide occupies residues 1–21 (MEGSVLTLVLLAALVVCGSWG). At 22 to 244 (LNEEERLIRH…VTFYLIIRRK (223 aa)) the chain is on the extracellular side. Asparagine 96 and asparagine 163 each carry an N-linked (GlcNAc...) asparagine glycan. Cysteine 150 and cysteine 164 form a disulfide bridge. Transmembrane regions (helical) follow at residues 245–269 (PLFY…VFYL), 279–296 (MAIS…LISK), and 311–332 (FLLF…VLNI). Residues 333 to 470 (HFRTPSTHVL…WNRVARTVDR (138 aa)) are Cytoplasmic-facing. Residue tyrosine 389 is modified to Phosphotyrosine; by Tyr-kinases. Residues 471–493 (LCLFVVTPIMVVGTAWIFLQGAY) traverse the membrane as a helical segment.

This sequence belongs to the ligand-gated ion channel (TC 1.A.9) family. Acetylcholine receptor (TC 1.A.9.1) subfamily. Delta/CHRND sub-subfamily. Pentamer of two alpha chains, and one each of the beta, delta, and gamma (in immature muscle) or epsilon (in mature muscle) chains. The muscle heteropentamer composed of alpha-1, beta-1, delta, epsilon subunits interacts with the alpha-conotoxin ImII.

The protein localises to the postsynaptic cell membrane. The protein resides in the cell membrane. The enzyme catalyses K(+)(in) = K(+)(out). The catalysed reaction is Na(+)(in) = Na(+)(out). In terms of biological role, after binding acetylcholine, the AChR responds by an extensive change in conformation that affects all subunits and leads to opening of an ion-conducting channel across the plasma membrane. In Bos taurus (Bovine), this protein is Acetylcholine receptor subunit delta (CHRND).